We begin with the raw amino-acid sequence, 548 residues long: Calcium-transporting ATPase (548 aa).

An N-terminal signal peptide occupies residues Met1–Ala21. The a divalent metal cation site is built by Asp37 and Thr78. The active-site Phosphothreonine intermediate is Thr78. Residues Asn99 and Lys160 to Arg162 each bind substrate. The ATP-binding motif lies at Asp179–Thr187. The a divalent metal cation site is built by Asp305, His309, Asp352, His353, and His488.

Mg(2+) serves as cofactor.

Its subcellular location is the cell inner membrane. It catalyses the reaction Ca(2+)(in) + ATP + H2O = Ca(2+)(out) + ADP + phosphate + H(+). With respect to regulation, completely inhibited by vanadate(3-). Also inhibited by lanthanoid atom and phosphate. Not inhibited by N-ethylmaleimide, 1,3-dicyclohexylcarbodiimide, oligomycin, ouabain, valinomycin, nigericin, thapsigargin, cyclopiazonic acid or fluorescein isothiocyanate. Its function is as follows. Catalyzes the hydrolysis of ATP coupled with the transport of calcium. Has some hydrolysis activity also with dATP, GTP, UTP, ITP and 4-nitrophenyl phosphate as substrate. No activity with ADP, CTP, acetyl dihydrogen phosphate or AMP-PNP as substrate. The protein is Calcium-transporting ATPase of Myroides odoratus (Flavobacterium odoratum).